The primary structure comprises 205 residues: Urease accessory protein UreG (205 aa).

11–18 (GPVGSGKT) lines the GTP pocket.

Belongs to the SIMIBI class G3E GTPase family. UreG subfamily. Homodimer. UreD, UreF and UreG form a complex that acts as a GTP-hydrolysis-dependent molecular chaperone, activating the urease apoprotein by helping to assemble the nickel containing metallocenter of UreC. The UreE protein probably delivers the nickel.

The protein localises to the cytoplasm. In terms of biological role, facilitates the functional incorporation of the urease nickel metallocenter. This process requires GTP hydrolysis, probably effectuated by UreG. The chain is Urease accessory protein UreG from Prochlorococcus marinus (strain NATL1A).